Consider the following 171-residue polypeptide: Endoribonuclease YbeY (171 aa).

The Zn(2+) site is built by histidine 126, histidine 130, and histidine 136.

Belongs to the endoribonuclease YbeY family. Requires Zn(2+) as cofactor.

It localises to the cytoplasm. Its function is as follows. Single strand-specific metallo-endoribonuclease involved in late-stage 70S ribosome quality control and in maturation of the 3' terminus of the 16S rRNA. The polypeptide is Endoribonuclease YbeY (Rhizobium johnstonii (strain DSM 114642 / LMG 32736 / 3841) (Rhizobium leguminosarum bv. viciae)).